We begin with the raw amino-acid sequence, 268 residues long: Single-stranded DNA-binding protein WHY3, chloroplastic (268 aa).

Residues 1–75 (MSQLLSSPPM…KQRFGDSSSS (75 aa)) constitute a chloroplast transit peptide. The interval 93–98 (KGKAAL) is required for ssDNA binding. A Nuclear localization signal motif is present at residues 171–185 (KGKGSDEGKVRKVLK).

This sequence belongs to the Whirly family. Homotetramer.

It is found in the plastid. Its subcellular location is the chloroplast. It localises to the nucleus. Single-stranded DNA-binding protein that functions in both chloroplasts and nucleus. In chloroplasts, maintains plastid genome stability by preventing break-induced and short homology-dependent illegitimate recombinations. In the nucleus, is recruited to a distal element upstream of the kinesin KP1 to mediate the transcriptional repression of KP1. Can bind double-stranded DNA in vivo. The polypeptide is Single-stranded DNA-binding protein WHY3, chloroplastic (WHY3) (Arabidopsis thaliana (Mouse-ear cress)).